The sequence spans 85 residues: Toxin AahP1005 (85 aa).

The first 19 residues, 1–19, serve as a signal peptide directing secretion; that stretch reads MNYLVMISLALLFMTGVES. The 63-residue stretch at 21-83 folds into the LCN-type CS-alpha/beta domain; the sequence is KDGYIVDDKN…VSTKKKGGCN (63 aa). Disulfide bonds link cysteine 31-cysteine 82, cysteine 35-cysteine 55, cysteine 41-cysteine 65, and cysteine 45-cysteine 67. Asparagine 83 bears the Asparagine amide mark.

Belongs to the long (4 C-C) scorpion toxin superfamily. Sodium channel inhibitor family. Alpha subfamily. Expressed by the venom gland.

The protein localises to the secreted. Its function is as follows. Alpha toxins bind voltage-independently at site-3 of sodium channels (Nav) and inhibit the inactivation of the activated channels, thereby blocking neuronal transmission. The protein is Toxin AahP1005 of Androctonus australis (Sahara scorpion).